Consider the following 119-residue polypeptide: Basic phospholipase A2 taipoxin alpha chain (119 aa).

7 disulfides stabilise this stretch: C11/C72, C27/C118, C29/C45, C44/C99, C51/C92, C61/C85, and C79/C90. Positions 28, 30, and 32 each coordinate Ca(2+). H48 is an active-site residue. D49 provides a ligand contact to Ca(2+). D93 is a catalytic residue.

The protein belongs to the phospholipase A2 family. Group I subfamily. D49 sub-subfamily. In terms of assembly, heterotrimer of alpha, beta, and gamma chains; non-covalently linked. It depends on Ca(2+) as a cofactor. As to expression, expressed by the venom gland.

It localises to the secreted. It catalyses the reaction a 1,2-diacyl-sn-glycero-3-phosphocholine + H2O = a 1-acyl-sn-glycero-3-phosphocholine + a fatty acid + H(+). Its function is as follows. Heterotrimer: Snake venom phospholipase A2 (PLA2) heterotrimer that acts as a potent presynaptic neurotoxin by blocking synaptic transmission and synaptic vesicle recycling. May act by binding in a calcium-dependent fashion to neurotonal pentraxin-1 (NPTX1) and neurotonal pentraxin-2 (NPTX2), but not to neuronal pentraxin receptor (NPTXR). Also binds to taipoxin-associated calcium binding protein 49 (RCN2), a protein localized in the lumen of endoplasmic reticulum. Monomer (alpha chain): Snake venom phospholipase A2 (PLA2) alpha chain that possesses the same high enzymatic activity as the heterotrimer. PLA2 catalyzes the calcium-dependent hydrolysis of the 2-acyl groups in 3-sn-phosphoglycerides. This chain is Basic phospholipase A2 taipoxin alpha chain, found in Oxyuranus scutellatus scutellatus (Australian taipan).